The following is a 449-amino-acid chain: Tubulin beta-5 chain (449 aa).

8 residues coordinate GTP: Q11, E70, S139, G143, T144, G145, N205, and N227. Residue E70 participates in Mg(2+) binding. Residues 427–449 (QDATADEEGEYDVEEEEEGDYET) are disordered. Acidic residues predominate over residues 430–449 (TADEEGEYDVEEEEEGDYET).

Belongs to the tubulin family. Dimer of alpha and beta chains. A typical microtubule is a hollow water-filled tube with an outer diameter of 25 nm and an inner diameter of 15 nM. Alpha-beta heterodimers associate head-to-tail to form protofilaments running lengthwise along the microtubule wall with the beta-tubulin subunit facing the microtubule plus end conferring a structural polarity. Microtubules usually have 13 protofilaments but different protofilament numbers can be found in some organisms and specialized cells. It depends on Mg(2+) as a cofactor.

It is found in the cytoplasm. The protein localises to the cytoskeleton. Tubulin is the major constituent of microtubules, a cylinder consisting of laterally associated linear protofilaments composed of alpha- and beta-tubulin heterodimers. Microtubules grow by the addition of GTP-tubulin dimers to the microtubule end, where a stabilizing cap forms. Below the cap, tubulin dimers are in GDP-bound state, owing to GTPase activity of alpha-tubulin. The protein is Tubulin beta-5 chain (TUBB5) of Arabidopsis thaliana (Mouse-ear cress).